Consider the following 453-residue polypeptide: Zinc finger and BTB domain-containing protein 44 (453 aa).

K4 participates in a covalent cross-link: Glycyl lysine isopeptide (Lys-Gly) (interchain with G-Cter in SUMO2). One can recognise a BTB domain in the interval 31–98 (CDITIRVQDR…AYTATLSINT (68 aa)). Residues S135, S159, S161, S165, S191, S194, and S199 each carry the phosphoserine modification. Position 200 is a phosphothreonine (T200). Positions 241–265 (QPEKAKQAENTRTLELPGPSEAGRR) are disordered. Residue K290 forms a Glycyl lysine isopeptide (Lys-Gly) (interchain with G-Cter in SUMO2) linkage. Disordered stretches follow at residues 295 to 324 (SDEE…PGSE) and 336 to 368 (SSSI…EDDR). Residues 304–318 (SQPVSASQSSLSDQQ) show a composition bias toward low complexity. The segment covering 352–361 (TLQSTSSTNA) has biased composition (polar residues). 2 C2H2-type zinc fingers span residues 399–421 (FQCP…MLIH) and 427–449 (FQCD…RLKH).

It is found in the nucleus. In Rattus norvegicus (Rat), this protein is Zinc finger and BTB domain-containing protein 44 (Zbtb44).